The sequence spans 619 residues: Genetic interactor of prohibitins 3, mitochondrial (619 aa).

The transit peptide at 1 to 55 (MLKAQIQTGLQLLQRAAVSHMRPSSCTSMLMRMRVHLAPRALQSQRSLSSSEFSP) directs the protein to the mitochondrion. In terms of domain architecture, CP-type G spans 162–372 (VAAVSDVMHS…IYDVPGFSSA (211 aa)).

It belongs to the TRAFAC class YlqF/YawG GTPase family. GEP3 subfamily.

It is found in the mitochondrion. May be involved in the mitochondrial lipid metabolism. This is Genetic interactor of prohibitins 3, mitochondrial (GEP3) from Clavispora lusitaniae (strain ATCC 42720) (Yeast).